A 290-amino-acid chain; its full sequence is Small ribosomal subunit biogenesis GTPase RsgA (290 aa).

The region spanning 61–218 (KSELVRPTVA…IVDTPGFSTL (158 aa)) is the CP-type G domain. GTP contacts are provided by residues 110 to 113 (NKID) and 161 to 169 (GPSGAGKST). Zn(2+) contacts are provided by Cys-243, Cys-248, His-250, and Cys-256.

This sequence belongs to the TRAFAC class YlqF/YawG GTPase family. RsgA subfamily. As to quaternary structure, monomer. Associates with 30S ribosomal subunit, binds 16S rRNA. The cofactor is Zn(2+).

The protein resides in the cytoplasm. In terms of biological role, one of several proteins that assist in the late maturation steps of the functional core of the 30S ribosomal subunit. Helps release RbfA from mature subunits. May play a role in the assembly of ribosomal proteins into the subunit. Circularly permuted GTPase that catalyzes slow GTP hydrolysis, GTPase activity is stimulated by the 30S ribosomal subunit. This Clostridium beijerinckii (strain ATCC 51743 / NCIMB 8052) (Clostridium acetobutylicum) protein is Small ribosomal subunit biogenesis GTPase RsgA.